The chain runs to 131 residues: MFGPFKLTSPVAGGLLWKIPWRMSTHQKTRQRERLRNVDQVIKQLTLGLHVQRCQDKGLTYQEAMESKKKYKPRSKSLRLLNKPSVFPKENQMSSKDKYWTFDKKAVGYRKGIHKVPKWTKISIRKAPKFF.

The transit peptide at 1 to 12 (MFGPFKLTSPVA) directs the protein to the mitochondrion.

This sequence belongs to the mitochondrion-specific ribosomal protein mL60 family. Component of the mitochondrial large ribosomal subunit (mt-LSU). Mature yeast 74S mitochondrial ribosomes consist of a small (37S) and a large (54S) subunit. The 37S small subunit contains a 15S ribosomal RNA (15S mt-rRNA) and 34 different proteins. The 54S large subunit contains a 21S rRNA (21S mt-rRNA) and 46 different proteins.

It is found in the mitochondrion. Functionally, component of the mitochondrial ribosome (mitoribosome), a dedicated translation machinery responsible for the synthesis of mitochondrial genome-encoded proteins, including at least some of the essential transmembrane subunits of the mitochondrial respiratory chain. The mitoribosomes are attached to the mitochondrial inner membrane and translation products are cotranslationally integrated into the membrane. The protein is Large ribosomal subunit protein mL60 (MRPL31) of Saccharomyces cerevisiae (strain ATCC 204508 / S288c) (Baker's yeast).